Consider the following 197-residue polypeptide: MENLKATELRLGLPGTEEEAAPPPSTPRAGSKRALAGEPDQAKIKPAAAAKAQVVGWPPVRSYRKSCLQPTTTTTKSKPPPAAAAAETQQKEDVAGAGGLFVKVSMDGAPYLRKIDLKVYKGYRELREALEAMFLCFSGGAAADAAVNPSDFAVTYEDKDGDLMLVGDVPFEMFISTCKRLRIMKGSEARGLGATRG.

2 disordered regions span residues 1-43 (MENL…DQAK) and 66-90 (SCLQ…ETQQ). The short motif at 9–13 (LRLGL) is the EAR-like (transcriptional repression) element. The PB1 domain maps to 99 to 186 (GLFVKVSMDG…TCKRLRIMKG (88 aa)).

The protein belongs to the Aux/IAA family. As to quaternary structure, homodimers and heterodimers. In terms of tissue distribution, highly expressed in etiolated seedlings. Expressed in roots.

The protein resides in the nucleus. Functionally, aux/IAA proteins are short-lived transcriptional factors that function as repressors of early auxin response genes at low auxin concentrations. In Oryza sativa subsp. japonica (Rice), this protein is Auxin-responsive protein IAA31 (IAA31).